Here is a 501-residue protein sequence, read N- to C-terminus: ATP synthase subunit alpha (501 aa).

Residue 169-176 (GDRQTGKT) participates in ATP binding.

This sequence belongs to the ATPase alpha/beta chains family. As to quaternary structure, F-type ATPases have 2 components, CF(1) - the catalytic core - and CF(0) - the membrane proton channel. CF(1) has five subunits: alpha(3), beta(3), gamma(1), delta(1), epsilon(1). CF(0) has three main subunits: a(1), b(2) and c(9-12). The alpha and beta chains form an alternating ring which encloses part of the gamma chain. CF(1) is attached to CF(0) by a central stalk formed by the gamma and epsilon chains, while a peripheral stalk is formed by the delta and b chains.

Its subcellular location is the cell membrane. The catalysed reaction is ATP + H2O + 4 H(+)(in) = ADP + phosphate + 5 H(+)(out). In terms of biological role, produces ATP from ADP in the presence of a proton gradient across the membrane. The alpha chain is a regulatory subunit. The polypeptide is ATP synthase subunit alpha (Streptococcus pneumoniae serotype 19F (strain G54)).